Here is a 274-residue protein sequence, read N- to C-terminus: uncharacterized protein (274 aa).

Positions 1 to 17 (MKKLLAGFLTLSLALAA) are cleaved as a signal peptide. Residue Cys18 is the site of N-palmitoyl cysteine attachment. Residue Cys18 is the site of S-diacylglycerol cysteine attachment. A disordered region spans residues 18–169 (CSNGSDDDSS…DANNGASSAN (152 aa)). Residues 25 to 76 (DSSKKDDSSKDNQSSDDKSKDSKNDDKKNNDSDKDKDNNSDSDKNSDSKSDD) are compositionally biased toward basic and acidic residues. Low complexity predominate over residues 91 to 169 (SDNASGSDSS…DANNGASSAN (79 aa)).

Its subcellular location is the cell membrane. This is an uncharacterized protein from Staphylococcus saprophyticus subsp. saprophyticus (strain ATCC 15305 / DSM 20229 / NCIMB 8711 / NCTC 7292 / S-41).